The primary structure comprises 381 residues: 4-hydroxyphenylpyruvate dioxygenase (381 aa).

VOC domains are found at residues 22–156 (GMDA…LVER) and 184–338 (AVDH…IFTK). Fe cation-binding residues include histidine 187, histidine 270, and glutamate 349.

The protein belongs to the 4HPPD family. Homodimer. Requires Fe cation as cofactor.

It catalyses the reaction 3-(4-hydroxyphenyl)pyruvate + O2 = homogentisate + CO2. The protein operates within amino-acid degradation; L-phenylalanine degradation; acetoacetate and fumarate from L-phenylalanine: step 3/6. In Streptomyces coelicolor (strain ATCC BAA-471 / A3(2) / M145), this protein is 4-hydroxyphenylpyruvate dioxygenase (hpd).